The chain runs to 623 residues: MPAFYGGKLTTFEDDEKESEYGYVRKVSGPVVVADGMAGAAMYELVRVGHDNLIGEIIRLEGDSATIQVYEETAGLTVNDPVLRTHKPLSVELGPGILGNIFDGIQRPLKTIAKRSGDVYIPRGVSVPALDKDCLWEFQPKDFVEGDTITGGDLYATVFENSLMQHHVALPPDAMGKITYLAPAGQYSLKDTVLELEFQGVKKSFTMLQTWPVRTPRPVASKLAADTPLLTGQRVLDALFPSVLGGTCAIPGAFGCGKTVISQALSKYSNSDAVVYVGCGERGNEMAEVLMDFPQLTMTLPDGREESVMKRTTLVANTSNMPVAAREASIYTGITIAEYFRDMGYNVSMMADSTSRWAEALREISGRLAEMPADSGYPAYLAARLASFYERAGKVKCLGGPERNGSVTIVGAVSPPGGDFSDPVTSATLSIVQVFWGLDKKLAQRKHFPSVNWLISYSKYSTALESFYEKFDSDFIDIRTKAREVLQREDDLNEIVQLVGKDALAEGDKITLETAKLLREDYLAQNAFTPYDKFCPFYKSVWMMRNIIHFYNLANQAVERGAGMDGQKISYSLIKHRLGDLFYRLVSQKFEDPAEGEDVLVGKFKKLHDDLTSGFRNLEDETR.

252–259 (GAFGCGKT) lines the ATP pocket.

Belongs to the ATPase alpha/beta chains family. In terms of assembly, V-ATPase is a heteromultimeric enzyme composed of a peripheral catalytic V1 complex (main components: subunits A, B, C, D, E, and F) attached to an integral membrane V0 proton pore complex (main component: the proteolipid protein).

It catalyses the reaction ATP + H2O + 4 H(+)(in) = ADP + phosphate + 5 H(+)(out). Catalytic subunit of the peripheral V1 complex of vacuolar ATPase. V-ATPase vacuolar ATPase is responsible for acidifying a variety of intracellular compartments in eukaryotic cells. This Brassica napus (Rape) protein is V-type proton ATPase catalytic subunit A.